The sequence spans 178 residues: DNA-directed RNA polymerase V subunit 7 (178 aa).

The protein belongs to the eukaryotic RPB7/RPC8 RNA polymerase subunit family. In terms of assembly, component of the RNA polymerase V complex.

Its subcellular location is the nucleus. In terms of biological role, DNA-dependent RNA polymerase catalyzes the transcription of DNA into RNA using the four ribonucleoside triphosphates as substrates. Component of RNA polymerase V involved in RNA-directed DNA methylation-dependent (RdDM) silencing of endogenous repeated sequences, including transposable elements. The protein is DNA-directed RNA polymerase V subunit 7 (NRPE7) of Arabidopsis thaliana (Mouse-ear cress).